A 345-amino-acid polypeptide reads, in one-letter code: Protein Tob1 (345 aa).

The Bipartite nuclear localization signal motif lies at 22 to 39 (RRRVNIFGEELERLLKKK). Positions 82–92 (VRGNLPQDLSV) are important for nuclear localization. A compositionally biased stretch (low complexity) spans 144 to 160 (DPASSVSSSPSPPFGHS). Residues 144 to 171 (DPASSVSSSPSPPFGHSAAVSPTFMPRS) are disordered. Residues 161 to 218 (AAVSPTFMPRSTQPLTFTTATFAATKFGSTKMKNSGRSNKVARTSPINLGLNVNDLLK) are required for interaction with CPEB3. T204 carries the phosphothreonine modification. The Nuclear export signal motif lies at 226–234 (MHSLYGLGL). Residues 231 to 267 (GLGLGSQQQPQQQQQPAQPPPPPPPPQQQQQQKTSAL) are disordered. The span at 237 to 246 (QQQPQQQQQP) shows a compositional bias: low complexity. Over residues 247-257 (AQPPPPPPPPQ) the composition is skewed to pro residues.

Belongs to the BTG family. In terms of assembly, interacts with ERBB2. Interacts with CNOT7. Interacts with CPEB3 (via C-terminal RNA-binding region); recruits CNOT7 to CPEB3 to form a ternary complex required for mRNA deadenylation and decay. Interacts with CNOT8. Interacts with CPEB4. In terms of processing, phosphorylated on Ser and Thr residues. Ubiquitous.

Its subcellular location is the cytoplasm. The protein localises to the nucleus. Functionally, anti-proliferative protein; the function is mediated by association with deadenylase subunits of the CCR4-NOT complex. Mediates CPEB3-accelerated mRNA deadenylation by binding to CPEB3 and recruiting CNOT7 which leads to target mRNA deadenylation and decay. The polypeptide is Protein Tob1 (TOB1) (Homo sapiens (Human)).